The chain runs to 491 residues: Lysosomal Pro-X carboxypeptidase (491 aa).

The first 17 residues, 1–17, serve as a signal peptide directing secretion; sequence MGCRALLLLSFLLLGAA. Positions 18–43 are excised as a propeptide; the sequence is TTIPPRLKTLGSPHLSASPTPDPAVA. N99 carries N-linked (GlcNAc...) asparagine glycosylation. The active-site Charge relay system is S177. The interval 192–332 is SKS domain; sequence HIVVGALAAS…QNIFQALSVY (141 aa). 4 disulfides stabilise this stretch: C213/C370, C231/C308, C262/C341, and C362/C392. N-linked (GlcNAc...) asparagine glycans are attached at residues N315, N334, and N343. N413 carries an N-linked (GlcNAc...) asparagine glycan. Residues D428 and H453 each act as charge relay system in the active site.

This sequence belongs to the peptidase S28 family. In terms of assembly, homodimer.

The protein localises to the lysosome. The enzyme catalyses Cleavage of a -Pro-|-Xaa bond to release a C-terminal amino acid.. In terms of biological role, cleaves C-terminal amino acids linked to proline in peptides such as angiotensin II, III and des-Arg9-bradykinin. This cleavage occurs at acidic pH, but enzymatic activity is retained with some substrates at neutral pH. In Mus musculus (Mouse), this protein is Lysosomal Pro-X carboxypeptidase (Prcp).